Consider the following 86-residue polypeptide: Insulin (86 aa).

Cystine bridges form between Cys-7-Cys-72, Cys-19-Cys-85, and Cys-71-Cys-76. Positions 33 to 63 (ELEDPQVGQADPGVVPEAGRLQPLALEMTLQ) are cleaved as a propeptide — c peptide.

This sequence belongs to the insulin family. As to quaternary structure, heterodimer of a B chain and an A chain linked by two disulfide bonds.

It is found in the secreted. Insulin decreases blood glucose concentration. It increases cell permeability to monosaccharides, amino acids and fatty acids. It accelerates glycolysis, the pentose phosphate cycle, and glycogen synthesis in liver. In Chinchilla chinchilla (Short-tailed chinchilla), this protein is Insulin (INS).